Consider the following 309-residue polypeptide: Putative S-adenosyl-L-methionine-dependent methyltransferase Mvan_0104 (309 aa).

S-adenosyl-L-methionine-binding positions include Asp134 and 163–164; that span reads DL.

This sequence belongs to the UPF0677 family.

In terms of biological role, exhibits S-adenosyl-L-methionine-dependent methyltransferase activity. The polypeptide is Putative S-adenosyl-L-methionine-dependent methyltransferase Mvan_0104 (Mycolicibacterium vanbaalenii (strain DSM 7251 / JCM 13017 / BCRC 16820 / KCTC 9966 / NRRL B-24157 / PYR-1) (Mycobacterium vanbaalenii)).